Here is a 1227-residue protein sequence, read N- to C-terminus: MTSNRKNENEIINALSIPAVSNHSAQMNLSTDARIEDSLCIAEGNNIDPFVSASTVQTGINIAGRILGVLGVPFAGQIASFYSFLVGELWPRGRDPWEIFLEHVEQLIRQQVTENTRDTALARLQGLGNSFRAYQQSLEDWLENRDDARTRSVLYTQYIALELDFLNAMPLFAIRNQEVPLLMVYAQAANLHLLLLRDASLFGSEFGLTSQEIQRYYERQVEKTREYSDYCARWYNTGLNNLRGTNAESWLRYNQFRRDLTLGVLDLVALFPSYDTRVYPMNTSAQLTREIYTDPIGRTNAPSGFASTNWFNNNAPSFSAIEAAVIRPPHLLDFPEQLTIFSVLSRWSNTQYMNYWVGHRLESRTIRGSLSTSTHGNTNTSINPVTLQFTSRDVYRTESFAGINILLTTPVNGVPWARFNWRNPLNSLRGSLLYTIGYTGVGTQLFDSETELPPETTERPNYESYSHRLSNIRLISGNTLRAPVYSWTHRSADRTNTISSDSITQIPLVKSFNLNSGTSVVSGPGFTGGDIIRTNVNGSVLSMGLNFNNTSLQRYRVRVRYAASQTMVLRVTVGGSTTFDQGFPSTMSANESLTSQSFRFAEFPVGISASGSQTAGISISNNAGRQTFHFDKIEFIPITATFEAEYDLERAQEAVNALFTNTNPRRLKTGVTDYHIDEVSNLVACLSDEFCLDEKRELLEKVKYAKRLSDERNLLQDPNFTSINKQPDFISTNEQSNFTSIHEQSEHGWWGSENITIQEGNDVFKENYVILPGTFNECYPTYLYQKIGEAELKAYTRYQLSGYIEDSQDLEIYLIRYNAKHETLDVPGTESVWPLSVESPIGRCGEPNRCAPHFEWNPDLDCSCRDGEKCAHHSHHFSLDIDVGCIDLHENLGVWVVFKIKTQEGHARLGNLEFIEEKPLLGEALSRVKRAEKKWRDKREKLQLETKRVYTEAKEAVDALFVDSQYDRLQADTNIGMIHAADKLVHRIREAYLSELSVIPGVNAEIFEELEGRIITAISLYDARNVVKNGDFNNGLACWNVKGHVDVQQSHHRSVLVIPEWEAEVSQAVRVCPGRGYILRVTAYKEGYGEGCVTIHEIENNTDELKFKNCEEEEVYPTDTGTCNDYTAHQGTAACNSRNAGYEDAYEVDTTASVNYKPTYEEETYTDVRRDNHCEYDRGYVNYPPVPAGYMTKELEYFPETDKVWIEIGETEGKFIVDSVELLLMEE.

Belongs to the delta endotoxin family.

Promotes colloidosmotic lysis by binding to the midgut epithelial cells of many lepidopteran larvae. The chain is Pesticidal crystal protein Cry1Be (cry1Be) from Bacillus thuringiensis.